A 170-amino-acid chain; its full sequence is Sec-independent protein translocase protein TatB (170 aa).

The chain crosses the membrane as a helical span at residues 1–21 (MIDLGISKLALIGAVALIVIG).

The protein belongs to the TatB family. As to quaternary structure, the Tat system comprises two distinct complexes: a TatABC complex, containing multiple copies of TatA, TatB and TatC subunits, and a separate TatA complex, containing only TatA subunits. Substrates initially bind to the TatABC complex, which probably triggers association of the separate TatA complex to form the active translocon.

The protein localises to the cell inner membrane. In terms of biological role, part of the twin-arginine translocation (Tat) system that transports large folded proteins containing a characteristic twin-arginine motif in their signal peptide across membranes. Together with TatC, TatB is part of a receptor directly interacting with Tat signal peptides. TatB may form an oligomeric binding site that transiently accommodates folded Tat precursor proteins before their translocation. This chain is Sec-independent protein translocase protein TatB, found in Cupriavidus necator (strain ATCC 17699 / DSM 428 / KCTC 22496 / NCIMB 10442 / H16 / Stanier 337) (Ralstonia eutropha).